The sequence spans 445 residues: Argininosuccinate synthase (445 aa).

ATP-binding positions include 17 to 25 and Ala43; that span reads AFSGGLDTS. An L-citrulline-binding site is contributed by Tyr99. ATP is bound by residues Gly129 and Thr131. L-aspartate is bound by residues Thr131, Asn135, and Asp136. Asn135 is a binding site for L-citrulline. Asp136 serves as a coordination point for ATP. 2 residues coordinate L-citrulline: Arg139 and Ser192. Asp194 is an ATP binding site. Positions 201, 203, and 280 each coordinate L-citrulline.

Belongs to the argininosuccinate synthase family. Type 2 subfamily. Homotetramer.

It is found in the cytoplasm. It catalyses the reaction L-citrulline + L-aspartate + ATP = 2-(N(omega)-L-arginino)succinate + AMP + diphosphate + H(+). It participates in amino-acid biosynthesis; L-arginine biosynthesis; L-arginine from L-ornithine and carbamoyl phosphate: step 2/3. This Burkholderia ambifaria (strain ATCC BAA-244 / DSM 16087 / CCUG 44356 / LMG 19182 / AMMD) (Burkholderia cepacia (strain AMMD)) protein is Argininosuccinate synthase.